The chain runs to 257 residues: Protein THYLAKOID ASSEMBLY 8-like, chloroplastic (257 aa).

A chloroplast-targeting transit peptide spans 1–55 (MTAIRVCSRKFPTFASIFFQNITRNPSIHRISFSNLKPKTLLHPIPPKPFTVFVS). 2 PPR repeats span residues 142–176 (DVFM…NLFP) and 177–211 (DSQT…PDPP).

The protein belongs to the PPR family. P subfamily.

Its subcellular location is the plastid. It is found in the chloroplast. Its function is as follows. Binds weakly to specific single strand RNA (ssRNA). In Arabidopsis thaliana (Mouse-ear cress), this protein is Protein THYLAKOID ASSEMBLY 8-like, chloroplastic.